Here is a 406-residue protein sequence, read N- to C-terminus: Argininosuccinate synthase (406 aa).

ATP-binding positions include 11–19 (AYSGGLDTS) and Ala-38. Residues Tyr-91 and Ser-96 each contribute to the L-citrulline site. Gly-121 is a binding site for ATP. Residues Thr-123, Asn-127, and Asp-128 each coordinate L-aspartate. L-citrulline is bound at residue Asn-127. L-citrulline contacts are provided by Arg-131, Ser-181, Ser-190, Glu-266, and Tyr-278.

It belongs to the argininosuccinate synthase family. Type 1 subfamily. Homotetramer.

The protein resides in the cytoplasm. The catalysed reaction is L-citrulline + L-aspartate + ATP = 2-(N(omega)-L-arginino)succinate + AMP + diphosphate + H(+). The protein operates within amino-acid biosynthesis; L-arginine biosynthesis; L-arginine from L-ornithine and carbamoyl phosphate: step 2/3. The chain is Argininosuccinate synthase from Campylobacter jejuni subsp. jejuni serotype O:6 (strain 81116 / NCTC 11828).